We begin with the raw amino-acid sequence, 40 residues long: Meleagrin (40 aa).

Pyrrolidone carboxylic acid is present on Q1. Intrachain disulfides connect C6–C33, C12–C28, and C16–C32.

It belongs to the transferrin family.

The sequence is that of Meleagrin from Meleagris gallopavo (Wild turkey).